Here is a 347-residue protein sequence, read N- to C-terminus: Selenide, water dikinase (347 aa).

Residue C17 is part of the active site. ATP is bound by residues K20 and 48–50 (TRD). D51 contacts Mg(2+). ATP is bound by residues D68, D91, and 139-141 (GHS). D91 serves as a coordination point for Mg(2+). D227 is a Mg(2+) binding site.

It belongs to the selenophosphate synthase 1 family. Class I subfamily. In terms of assembly, homodimer. Requires Mg(2+) as cofactor.

The catalysed reaction is hydrogenselenide + ATP + H2O = selenophosphate + AMP + phosphate + 2 H(+). In terms of biological role, synthesizes selenophosphate from selenide and ATP. In Escherichia coli O9:H4 (strain HS), this protein is Selenide, water dikinase.